Here is a 555-residue protein sequence, read N- to C-terminus: MTEWWKKAVVYQIYPRSFYDTNGDGIGDLRGIMDKLDYLKTLGIDCIWISPVYDSPQDDNGYDIRDYRKIDKMFGTNEDMDRLLDEAHARGIKIVMDLVVNHTSDEHAWFVESRKSKDNPYRDFYFWKDPKPDGTPPNNWGSMFSGSAWEYDETTGQYYLHYFSKKQPDLNWENEKVRKEIYDMMKFWMDKGVDGWRMDVIGSISKFLDFPDYELPEGQKYGIGKYHANGPRLHAFIQEMNREVLSKYDCMTVGEAIGSDVEIARKYTGPDRHELNMIFNFEHMDVDTKPGSPAGKWALKPFDLVELKQILSRWQYELADTGWNALYFENHDQARVVSRWGNDTTYRAECAKAFATILHGLKGTPFIYQGEEIGMVNADLELEEYDDIEIRNAYQELVMENQIMSKDEFLTAVRKKGRDNARTPMQWDGSFNAGFTTGTPWLKVNSRYSEINVAKALQEPDSIFYYYQSLIKLRHSYDVFTDGRYELLMPDHPHLYVYTRENESEKLLVAANLSENTVSFDQPDDNWKLLLGNYEDTGTSTLFRPYEAAIYYLEK.

The active-site Nucleophile is Asp-199. Residue Glu-255 is the Proton donor of the active site.

This sequence belongs to the glycosyl hydrolase 13 family.

Its subcellular location is the cytoplasm. The enzyme catalyses Hydrolysis of (1-&gt;6)-alpha-D-glucosidic linkages in some oligosaccharides produced from starch and glycogen by alpha-amylase, and in isomaltose.. The sequence is that of Oligo-1,6-glucosidase (malL) from Heyndrickxia coagulans (Weizmannia coagulans).